The chain runs to 347 residues: Uroporphyrinogen decarboxylase (347 aa).

Substrate is bound by residues 23-27 (RQAGR), aspartate 73, tyrosine 150, threonine 205, and histidine 323.

This sequence belongs to the uroporphyrinogen decarboxylase family. In terms of assembly, homodimer.

The protein localises to the cytoplasm. The enzyme catalyses uroporphyrinogen III + 4 H(+) = coproporphyrinogen III + 4 CO2. Its pathway is porphyrin-containing compound metabolism; protoporphyrin-IX biosynthesis; coproporphyrinogen-III from 5-aminolevulinate: step 4/4. Its function is as follows. Catalyzes the decarboxylation of four acetate groups of uroporphyrinogen-III to yield coproporphyrinogen-III. This is Uroporphyrinogen decarboxylase from Ruthia magnifica subsp. Calyptogena magnifica.